The chain runs to 554 residues: HMG box-containing protein 4 (554 aa).

Disordered regions lie at residues 14–34 (RGMEDVGLAAGRSQREKKRSY), 47–368 (QVRK…SAYQ), and 418–468 (HKQN…SPAK). Residues 117–127 (TSPQVDTSTTH) show a composition bias toward polar residues. Positions 221 to 230 (TGREETESRS) are enriched in basic and acidic residues. Polar residues predominate over residues 242–255 (PRSGGTPDSASSTG). Residues 272-300 (MKKKKKSKKSKKKKDKHKDEKHRKHSKSK) are compositionally biased toward basic residues. The span at 317 to 335 (LPSPPPPTATTPTSPPSVP) shows a compositional bias: pro residues. Residues 342–358 (HAEEQLDKKKKKEDPEK) show a composition bias toward basic and acidic residues. The segment at residues 360 to 428 (KKKNMSAYQV…KQNKAEATTV (69 aa)) is a DNA-binding region (HMG box). Residues 434 to 466 (SSESAARSKGSSSGLPSPNKKSPTSVVSFSTSP) show a composition bias toward low complexity.

Interacts with nlk.2.

Its subcellular location is the nucleus. Functionally, negatively regulates Wnt/beta-catenin signaling during development. In Xenopus tropicalis (Western clawed frog), this protein is HMG box-containing protein 4 (hmgxb4).